The sequence spans 160 residues: Myosin catalytic light chain LC-1, mantle muscle (160 aa).

Residue 1 is subject to Blocked amino end (Xaa). EF-hand domains are found at residues aspartate 7–asparagine 44, threonine 83–arginine 118, and isoleucine 119–glycine 153.

Functionally, in molluscan muscle, calcium regulation is associated with myosin rather than with actin. Muscle myosin contains two types of light chains: the catalytic light chain, essential for ATPase activity, and the regulatory light chain, a calcium-binding protein responsible for Ca(2+) dependent binding and Ca(2+) dependent Mg-ATPase activity. The polypeptide is Myosin catalytic light chain LC-1, mantle muscle (Todarodes pacificus (Japanese flying squid)).